A 296-amino-acid polypeptide reads, in one-letter code: Sulfotransferase 1C2 (296 aa).

Residue 49 to 54 participates in 3'-phosphoadenylyl sulfate binding; that stretch reads KAGTTW. 107 to 109 contributes to the substrate binding site; the sequence is KTH. Residue His109 is the Proton acceptor of the active site. 3'-phosphoadenylyl sulfate contacts are provided by residues Arg131, Ser139, Tyr194, and 228–233; that span reads TSFEKM. Phosphoserine is present on Ser139. Phosphoserine is present on Ser254. Residue 256–260 participates in 3'-phosphoadenylyl sulfate binding; that stretch reads FMRKG.

The protein belongs to the sulfotransferase 1 family. In terms of tissue distribution, found in adult stomach, kidney and thyroid gland, and in fetal kidney and liver.

Its subcellular location is the cytoplasm. It is found in the lysosome. The protein localises to the mitochondrion. The catalysed reaction is a phenol + 3'-phosphoadenylyl sulfate = an aryl sulfate + adenosine 3',5'-bisphosphate + H(+). The enzyme catalyses cholesterol + 3'-phosphoadenylyl sulfate = cholesterol sulfate + adenosine 3',5'-bisphosphate + H(+). Sulfotransferase that utilizes 3'-phospho-5'-adenylyl sulfate (PAPS) to catalyze the sulfate conjugation of phenolic compounds. Does not transfer sulfate to steroids, dopamine, acetaminophen, or alpha-naphthol. Except in mitochondria, where it can add sulfate to cholesterol producing cholesterol sulfate, which alters mitochondrial membrane organization, and impacts protein complex mobility increasing state-III respiration, thereby modulating mitochondrial respiration. Catalyzes the sulfation of the carcinogenic N-hydroxy-2-acetylaminofluorene leading to highly reactive intermediates capable of forming DNA adducts, potentially resulting in mutagenesis. The polypeptide is Sulfotransferase 1C2 (SULT1C2) (Homo sapiens (Human)).